Reading from the N-terminus, the 149-residue chain is Small ribosomal subunit protein uS13 (149 aa).

The protein belongs to the universal ribosomal protein uS13 family. Part of the 30S ribosomal subunit. Forms a loose heterodimer with protein S19. Forms two bridges to the 50S subunit in the 70S ribosome.

Its function is as follows. Located at the top of the head of the 30S subunit, it contacts several helices of the 16S rRNA. In the 70S ribosome it contacts the 23S rRNA (bridge B1a) and protein L5 of the 50S subunit (bridge B1b), connecting the 2 subunits; these bridges are implicated in subunit movement. In Methanococcus maripaludis (strain DSM 14266 / JCM 13030 / NBRC 101832 / S2 / LL), this protein is Small ribosomal subunit protein uS13.